The primary structure comprises 152 residues: Nucleoside diphosphate kinase A (152 aa).

ATP-binding residues include Lys12, Phe60, Arg88, and Thr94. A Glycyl lysine isopeptide (Lys-Gly) (interchain with G-Cter in ubiquitin) cross-link involves residue Lys100. ATP contacts are provided by Arg105 and Asn115. The active-site Pros-phosphohistidine intermediate is the His118. 3 positions are modified to phosphoserine: Ser120, Ser122, and Ser125.

The protein belongs to the NDK family. Hexamer of two different chains: An and B (A6, A5B, A4B2, A3B3, A2B4, AB5, B6). Interacts with PRUNE1. Component of the SET complex, composed of at least ANP32A, APEX1, HMGB2, NME1, SET and TREX1. Within this complex, interacts directly with SET. Also interacts with TREX1, but only following translocation to the nucleus. Mg(2+) is required as a cofactor. As to expression, isoform 1 is expressed in heart, brain, placenta, lung, liver, skeletal muscle, pancreas, spleen and thymus. Expressed in lung carcinoma cell lines but not in normal lung tissues. Isoform 2 is ubiquitously expressed and its expression is also related to tumor differentiation.

It is found in the cytoplasm. It localises to the nucleus. The enzyme catalyses a 2'-deoxyribonucleoside 5'-diphosphate + ATP = a 2'-deoxyribonucleoside 5'-triphosphate + ADP. The catalysed reaction is a ribonucleoside 5'-diphosphate + ATP = a ribonucleoside 5'-triphosphate + ADP. Its activity is regulated as follows. Autophosphorylation at His-118 increases serine/threonine protein kinase activity of the enzyme. Interaction with the SET complex inhibits the endonuclease activity. In terms of biological role, major role in the synthesis of nucleoside triphosphates other than ATP. The ATP gamma phosphate is transferred to the NDP beta phosphate via a ping-pong mechanism, using a phosphorylated active-site intermediate. Possesses nucleoside-diphosphate kinase, serine/threonine-specific protein kinase, geranyl and farnesyl pyrophosphate kinase, histidine protein kinase and 3'-5' exonuclease activities. Involved in cell proliferation, differentiation and development, signal transduction, G protein-coupled receptor endocytosis, and gene expression. Required for neural development including neural patterning and cell fate determination. During GZMA-mediated cell death, works in concert with TREX1. NME1 nicks one strand of DNA and TREX1 removes bases from the free 3' end to enhance DNA damage and prevent DNA end reannealing and rapid repair. This is Nucleoside diphosphate kinase A (NME1) from Homo sapiens (Human).